A 435-amino-acid polypeptide reads, in one-letter code: ATP-dependent protease ATPase subunit HslU (435 aa).

ATP contacts are provided by residues valine 18, glycine 60–glutamate 65, aspartate 248, glutamate 313, and arginine 385.

It belongs to the ClpX chaperone family. HslU subfamily. As to quaternary structure, a double ring-shaped homohexamer of HslV is capped on each side by a ring-shaped HslU homohexamer. The assembly of the HslU/HslV complex is dependent on binding of ATP.

It localises to the cytoplasm. Its function is as follows. ATPase subunit of a proteasome-like degradation complex; this subunit has chaperone activity. The binding of ATP and its subsequent hydrolysis by HslU are essential for unfolding of protein substrates subsequently hydrolyzed by HslV. HslU recognizes the N-terminal part of its protein substrates and unfolds these before they are guided to HslV for hydrolysis. The protein is ATP-dependent protease ATPase subunit HslU of Azorhizobium caulinodans (strain ATCC 43989 / DSM 5975 / JCM 20966 / LMG 6465 / NBRC 14845 / NCIMB 13405 / ORS 571).